A 241-amino-acid polypeptide reads, in one-letter code: Glucosamine-6-phosphate deaminase (241 aa).

D67 acts as the Proton acceptor; for enolization step in catalysis. The For ring-opening step role is filled by N136. The active-site Proton acceptor; for ring-opening step is H138. E143 serves as the catalytic For ring-opening step.

It belongs to the glucosamine/galactosamine-6-phosphate isomerase family. NagB subfamily.

The catalysed reaction is alpha-D-glucosamine 6-phosphate + H2O = beta-D-fructose 6-phosphate + NH4(+). It participates in amino-sugar metabolism; N-acetylneuraminate degradation; D-fructose 6-phosphate from N-acetylneuraminate: step 5/5. Catalyzes the reversible isomerization-deamination of glucosamine 6-phosphate (GlcN6P) to form fructose 6-phosphate (Fru6P) and ammonium ion. The polypeptide is Glucosamine-6-phosphate deaminase (Bacillus velezensis (strain DSM 23117 / BGSC 10A6 / LMG 26770 / FZB42) (Bacillus amyloliquefaciens subsp. plantarum)).